The chain runs to 201 residues: Small ribosomal subunit protein uS4c (201 aa).

Residues 1–14 are compositionally biased toward basic residues; sequence MSRYRGPRFKKIRR. The tract at residues 1-44 is disordered; sequence MSRYRGPRFKKIRRLGALPGLTSKRPRAGSDPRNQSRSGKKSQY. An S4 RNA-binding domain is found at 89–152; sequence MRLDNTLFRL…NSRTLVQNLL (64 aa).

This sequence belongs to the universal ribosomal protein uS4 family. Part of the 30S ribosomal subunit. Contacts protein S5. The interaction surface between S4 and S5 is involved in control of translational fidelity.

Its subcellular location is the plastid. It localises to the chloroplast. In terms of biological role, one of the primary rRNA binding proteins, it binds directly to 16S rRNA where it nucleates assembly of the body of the 30S subunit. Its function is as follows. With S5 and S12 plays an important role in translational accuracy. The polypeptide is Small ribosomal subunit protein uS4c (rps4) (Draba nemorosa (Woodland whitlowgrass)).